A 70-amino-acid polypeptide reads, in one-letter code: NAD(P)H-quinone oxidoreductase subunit O (70 aa).

The protein belongs to the complex I NdhO subunit family. As to quaternary structure, NDH-1 can be composed of about 15 different subunits; different subcomplexes with different compositions have been identified which probably have different functions.

It localises to the cellular thylakoid membrane. It catalyses the reaction a plastoquinone + NADH + (n+1) H(+)(in) = a plastoquinol + NAD(+) + n H(+)(out). The enzyme catalyses a plastoquinone + NADPH + (n+1) H(+)(in) = a plastoquinol + NADP(+) + n H(+)(out). NDH-1 shuttles electrons from an unknown electron donor, via FMN and iron-sulfur (Fe-S) centers, to quinones in the respiratory and/or the photosynthetic chain. The immediate electron acceptor for the enzyme in this species is believed to be plastoquinone. Couples the redox reaction to proton translocation, and thus conserves the redox energy in a proton gradient. Cyanobacterial NDH-1 also plays a role in inorganic carbon-concentration. The protein is NAD(P)H-quinone oxidoreductase subunit O of Trichormus variabilis (strain ATCC 29413 / PCC 7937) (Anabaena variabilis).